Consider the following 259-residue polypeptide: 5'-nucleotidase SurE 1 (259 aa).

Residues D16, D17, S48, and N101 each contribute to the a divalent metal cation site.

The protein belongs to the SurE nucleotidase family. A divalent metal cation is required as a cofactor.

The protein localises to the cytoplasm. The enzyme catalyses a ribonucleoside 5'-phosphate + H2O = a ribonucleoside + phosphate. Functionally, nucleotidase that shows phosphatase activity on nucleoside 5'-monophosphates. This chain is 5'-nucleotidase SurE 1, found in Burkholderia lata (strain ATCC 17760 / DSM 23089 / LMG 22485 / NCIMB 9086 / R18194 / 383).